Consider the following 226-residue polypeptide: Matrix protein (226 aa).

The short motif at 2-4 (KSL) is the dynamin binding element. The PPXY motif motif lies at 28–31 (PPSY). The short motif at 40-43 (PSAP) is the PTAP/PSAP motif element.

Belongs to the vesiculoviruses matrix protein family. In terms of assembly, homomultimer. Interacts with viral nucleocapsid; this interaction contributes to the virion assembly. Interacts with the viral envelope glycoprotein; this interaction contributes to the virion assembly. Interacts with host RAE1-NUP98 complex. Interacts with host NEDD4 and TSG101. Interacts with host dynamin. Interacts with host NDUFAF4; the interaction inhibits viral propagation and is independent of interferon activation. Interacts with host GTF2H5; the interaction may inhibit host transcription. Phosphorylated by host.

It localises to the virion. The protein resides in the host endomembrane system. The protein localises to the host nucleus membrane. It is found in the host nucleus. Its subcellular location is the host cytoplasm. Functionally, forms a double layer around the helical nucleocapsid, the inner matrix layer binding to the N helix and the outer matrix layer binding to the envelope glycoprotein. Plays a major role in assembly and budding of virion, by recruiting cellular partners of the ESCRT complexes that play a key role in releasing the budding particle from the host membrane. Condensates the ribonucleocapsid core during virus assembly. Inhibits the host mRNA nuclear export thereby inducing the shut off of cellular transcription and preventing the interferon signaling and the establishment of antiviral state in infected cells. This shutoff presumably inhibits interferon signaling and thus establishment of antiviral state in virus infected cells. Induces cell-rounding, cytoskeleton disorganization and apoptosis in infected cell. Inhibits host transcription, possibly through interaction with host DNA repair factor IIH/TFIIH GTF2H5 subunit. The protein is Matrix protein (M) of Isfahan virus (ISFV).